Consider the following 469-residue polypeptide: uncharacterized protein (469 aa).

Positions 13–81 constitute an HTH gntR-type domain; sequence TPLYEQLYTF…PKIGWFAAEV (69 aa). A DNA-binding region (H-T-H motif) is located at residues 41 to 60; that stretch reads KRRLSSLLDVSTATIERAYE. Lys-309 is modified (N6-(pyridoxal phosphate)lysine).

In the C-terminal section; belongs to the class-I pyridoxal-phosphate-dependent aminotransferase family. The cofactor is pyridoxal 5'-phosphate.

This is an uncharacterized protein from Bacillus subtilis (strain 168).